A 492-amino-acid chain; its full sequence is Glutamate--tRNA ligase (492 aa).

The short motif at Pro13–Met23 is the 'HIGH' region element. The 'KMSKS' region motif lies at Lys257 to Arg261. Position 260 (Lys260) interacts with ATP.

It belongs to the class-I aminoacyl-tRNA synthetase family. Glutamate--tRNA ligase type 1 subfamily. As to quaternary structure, monomer.

It localises to the cytoplasm. It catalyses the reaction tRNA(Glu) + L-glutamate + ATP = L-glutamyl-tRNA(Glu) + AMP + diphosphate. Catalyzes the attachment of glutamate to tRNA(Glu) in a two-step reaction: glutamate is first activated by ATP to form Glu-AMP and then transferred to the acceptor end of tRNA(Glu). The sequence is that of Glutamate--tRNA ligase from Mycolicibacterium paratuberculosis (strain ATCC BAA-968 / K-10) (Mycobacterium paratuberculosis).